The primary structure comprises 64 residues: Large ribosomal subunit protein bL35 (64 aa).

It belongs to the bacterial ribosomal protein bL35 family.

The chain is Large ribosomal subunit protein bL35 from Vibrio metschnikovii.